Here is a 200-residue protein sequence, read N- to C-terminus: Dipicolinate synthase subunit B (200 aa).

In terms of assembly, dipicolinate synthase likely consists of DpaA and DpaB, since both proteins are required for DPA synthesis.

It carries out the reaction (S)-2,3-dihydrodipicolinate + NADP(+) = dipicolinate + NADPH + H(+). Its function is as follows. Together with DpaA, catalyzes the conversion of dihydrodipicolinate to dipicolinate (DPA), which constitutes up to 10% of the dry weight of the spore. This chain is Dipicolinate synthase subunit B (dpaB), found in Bacillus subtilis (strain 168).